Here is a 116-residue protein sequence, read N- to C-terminus: MIGCDIVACSRIESIYNRHNTLFLDKFLSKQEQAYIKNTNTIAGFWAIKEAASKALGVGISKECSFFDIIIFKDNKNAPHIKFSTKVMKEFDIKSASVSVAHDGGFAIAVVAIEKN.

Residues Asp5 and Glu50 each contribute to the Mg(2+) site.

The protein belongs to the P-Pant transferase superfamily. AcpS family. The cofactor is Mg(2+).

The protein resides in the cytoplasm. It catalyses the reaction apo-[ACP] + CoA = holo-[ACP] + adenosine 3',5'-bisphosphate + H(+). Its function is as follows. Transfers the 4'-phosphopantetheine moiety from coenzyme A to a Ser of acyl-carrier-protein. In Campylobacter lari (strain RM2100 / D67 / ATCC BAA-1060), this protein is Holo-[acyl-carrier-protein] synthase.